Here is a 344-residue protein sequence, read N- to C-terminus: Phenylalanine--tRNA ligase alpha subunit (344 aa).

Position 259 (E259) interacts with Mg(2+).

It belongs to the class-II aminoacyl-tRNA synthetase family. Phe-tRNA synthetase alpha subunit type 1 subfamily. Tetramer of two alpha and two beta subunits. Mg(2+) serves as cofactor.

Its subcellular location is the cytoplasm. It catalyses the reaction tRNA(Phe) + L-phenylalanine + ATP = L-phenylalanyl-tRNA(Phe) + AMP + diphosphate + H(+). The polypeptide is Phenylalanine--tRNA ligase alpha subunit (Petrotoga mobilis (strain DSM 10674 / SJ95)).